Here is a 459-residue protein sequence, read N- to C-terminus: Cysteine--tRNA ligase (459 aa).

A Zn(2+)-binding site is contributed by cysteine 28. Residues 30–40 (VTIYDLCHIGH) carry the 'HIGH' region motif. 3 residues coordinate Zn(2+): cysteine 209, histidine 234, and glutamate 238. Residues 266–270 (KMSKS) carry the 'KMSKS' region motif. An ATP-binding site is contributed by lysine 269.

It belongs to the class-I aminoacyl-tRNA synthetase family. Monomer. It depends on Zn(2+) as a cofactor.

The protein localises to the cytoplasm. The catalysed reaction is tRNA(Cys) + L-cysteine + ATP = L-cysteinyl-tRNA(Cys) + AMP + diphosphate. The sequence is that of Cysteine--tRNA ligase from Shewanella baltica (strain OS223).